A 683-amino-acid chain; its full sequence is Transforming growth factor-beta-induced protein ig-h3 (683 aa).

The N-terminal stretch at 1–23 is a signal peptide; it reads MALLGRLLPLALALALGPAATHA. S37 is subject to Phosphoserine. One can recognise an EMI domain in the interval 45 to 99; it reads GPNVCAVQKLIGTNKKYFTNCKQWYQRKICGKSTVISYECCPGYEKVPGEKGCPA. Cystine bridges form between C49–C85, C74–C339, C84–C97, C214–C317, and C473–C478. C65 is modified (S-cysteinyl cysteine). FAS1 domains are found at residues 103–236, 240–371, 375–498, and 502–632; these read LSNL…DKVI, TNNI…DELL, SAKT…DRML, and MGTV…NTVL. Residues 642–644 carry the Cell attachment site motif; that stretch reads RGD.

In terms of assembly, binds to type I, II, and IV collagens. In terms of processing, gamma-carboxyglutamated; gamma-carboxyglutamate residues are formed by vitamin K dependent carboxylation; these residues may be required for binding to calcium. According to a report, does not contain any vitamin K-dependent gamma-carboxyglutamate residues. The EMI domain contains 2 expected intradomain disulfide bridges (Cys-49-Cys85 and Cys-84-Cys-97) and one unusual interdomain disulfide bridge to the second FAS1 domain (Cys-74-Cys-339). This arrangement violates the predicted disulfide bridge pattern of an EMI domain. Widely distributed in various tissues except for the brain. High levels in corneal epithelium.

Its subcellular location is the secreted. The protein resides in the extracellular space. The protein localises to the extracellular matrix. Functionally, plays a role in cell adhesion. May play a role in cell-collagen interactions. This chain is Transforming growth factor-beta-induced protein ig-h3 (TGFBI), found in Sus scrofa (Pig).